Reading from the N-terminus, the 448-residue chain is Cysteine--tRNA ligase (448 aa).

A Zn(2+)-binding site is contributed by C27. Residues 29 to 39 (PTVYNYIHVGN) carry the 'HIGH' region motif. Residues C210, H235, and E239 each contribute to the Zn(2+) site. Positions 267 to 271 (KMSKS) match the 'KMSKS' region motif. K270 contributes to the ATP binding site.

The protein belongs to the class-I aminoacyl-tRNA synthetase family. In terms of assembly, monomer. Requires Zn(2+) as cofactor.

The protein resides in the cytoplasm. It catalyses the reaction tRNA(Cys) + L-cysteine + ATP = L-cysteinyl-tRNA(Cys) + AMP + diphosphate. This is Cysteine--tRNA ligase from Lactococcus lactis subsp. cremoris (strain MG1363).